The primary structure comprises 634 residues: Kelch-like protein 22 (634 aa).

Ala-2 bears the N-acetylalanine mark. A BTB domain is found at 50–117; it reads FDVVLVVEGK…IYTSELELSL (68 aa). Kelch repeat units follow at residues 299–349, 350–399, 400–446, 448–493, 495–544, and 545–593; these read CVVG…VLNN, FVYL…VVGK, YIYA…TLQG, MYIT…ALLD, LFVI…VLDS, and RIYV…VLTL. Thr-463 carries the post-translational modification Phosphothreonine. A Phosphotyrosine modification is found at Tyr-466. Position 475 is a phosphothreonine (Thr-475). Residues 600 to 634 are disordered; the sequence is EQPRGTPNRSQADADFASEVMSVSDWEEFDNSSED. Thr-605 bears the Phosphothreonine mark. Residues 624–634 show a composition bias toward acidic residues; the sequence is DWEEFDNSSED.

In terms of assembly, component of the BCR(KLHL22) E3 ubiquitin ligase complex, at least composed of CUL3, KLHL22 and RBX1. Interacts with PLK1. Interacts with DEPDC5 (via DEP domain); the interaction depends on amino acid availability. Interacts with YWHAE; required for the nuclear localization of KLHL22 upon amino acid starvation.

It is found in the cytoplasm. The protein localises to the cytosol. It localises to the cytoskeleton. Its subcellular location is the microtubule organizing center. The protein resides in the centrosome. It is found in the spindle. The protein localises to the nucleus. It localises to the lysosome. It functions in the pathway protein modification; protein ubiquitination. Functionally, substrate-specific adapter of a BCR (BTB-CUL3-RBX1) E3 ubiquitin ligase complex required for chromosome alignment and localization of PLK1 at kinetochores. The BCR(KLHL22) ubiquitin ligase complex mediates monoubiquitination of PLK1, leading to PLK1 dissociation from phosphoreceptor proteins and subsequent removal from kinetochores, allowing silencing of the spindle assembly checkpoint (SAC) and chromosome segregation. Monoubiquitination of PLK1 does not lead to PLK1 degradation. The BCR(KLHL22) ubiquitin ligase complex is also responsible for the amino acid-stimulated 'Lys-48' polyubiquitination and proteasomal degradation of DEPDC5. Through the degradation of DEPDC5, releases the GATOR1 complex-mediated inhibition of the TORC1 pathway. It is therefore an amino acid-dependent activator within the amino acid-sensing branch of the TORC1 pathway, indirectly regulating different cellular processes including cell growth and autophagy. The chain is Kelch-like protein 22 from Mus musculus (Mouse).